The primary structure comprises 481 residues: Bestrophin homolog 17 (481 aa).

The Cytoplasmic segment spans residues 1-27 (MTVSYQLDVSSGNPLLFLRLLGRWRGS). A helical membrane pass occupies residues 28 to 48 (IWKSVVGDLFVWLLFYYAIYF). The Extracellular portion of the chain corresponds to 49-95 (AYRYAFSKQLQTVFEEISIHTDDRMKYLPLTFMLGFFVTTVFERWRS). A helical transmembrane segment spans residues 96-116 (ALNVMPFIESVALSVAVLLPG). Residues 117–230 (KGREDRLTRR…AMETLIKFDA (114 aa)) are Cytoplasmic-facing. The chain crosses the membrane as a helical span at residues 231 to 251 (IPIPIAYPQVVFLAVRVYFAI). The Extracellular portion of the chain corresponds to 252-274 (CLVSRQFLISDMKSKTQMDWPVP). The chain crosses the membrane as a helical span at residues 275–295 (IMTVLEFIFVIGWMKVAEVLL). The Cytoplasmic portion of the chain corresponds to 296–481 (NPLGEDDDDF…SSEESVDKKG (186 aa)). Residues 427 to 481 (AGMLNKSTQPDRPTMETVSEEHEPSHFYRGDRVHSSDSGLSKTQQSSEESVDKKG) are disordered. A compositionally biased stretch (basic and acidic residues) spans 445 to 461 (SEEHEPSHFYRGDRVHS). Over residues 462–474 (SDSGLSKTQQSSE) the composition is skewed to polar residues.

The protein belongs to the anion channel-forming bestrophin (TC 1.A.46) family. Calcium-sensitive chloride channel subfamily. Forms oligomers.

The protein localises to the cell membrane. In terms of biological role, forms chloride channels. The protein is Bestrophin homolog 17 of Caenorhabditis elegans.